A 449-amino-acid polypeptide reads, in one-letter code: UNC93-like protein MFSD11 (449 aa).

The chain crosses the membrane as a helical span at residues 8–28 (LFNIIILGVAFMFMFTAFQTC). An N-linked (GlcNAc...) asparagine glycan is attached at Asn40. Transmembrane regions (helical) follow at residues 53–73 (AIIY…VAIV), 74–94 (GPQL…AVFI), 96–116 (PFPW…AVLW), 138–158 (IFWA…YFAW), and 170–190 (RTVF…FFLI). Phosphoserine is present on Ser204. A run of 6 helical transmembrane segments spans residues 239–259 (MLLL…FSGV), 277–297 (LIGL…SLFG), 309–329 (PVVL…FLNM), 359–379 (FLLG…LGFL), 385–405 (APAF…AFFY), and 410–430 (LLHW…ISFF).

This sequence belongs to the unc-93 family.

The protein resides in the membrane. The chain is UNC93-like protein MFSD11 (MFSD11) from Homo sapiens (Human).